We begin with the raw amino-acid sequence, 22 residues long: NADH-ubiquinone oxidoreductase 16 kDa subunit (22 aa).

As to quaternary structure, complex I is composed of about 45 different subunits.

Its subcellular location is the mitochondrion inner membrane. It carries out the reaction a ubiquinone + NADH + 5 H(+)(in) = a ubiquinol + NAD(+) + 4 H(+)(out). In terms of biological role, transfer of electrons from NADH to the respiratory chain. The immediate electron acceptor for the enzyme is believed to be ubiquinone. The protein is NADH-ubiquinone oxidoreductase 16 kDa subunit of Solanum tuberosum (Potato).